A 250-amino-acid chain; its full sequence is 2,3-bisphosphoglycerate-dependent phosphoglycerate mutase (250 aa).

Residues 8–15 (RHGQSAWN), 21–22 (TG), Arg60, 87–90 (ERHY), Lys98, 114–115 (RR), and 183–184 (GN) contribute to the substrate site. Residue His9 is the Tele-phosphohistidine intermediate of the active site. The active-site Proton donor/acceptor is Glu87.

This sequence belongs to the phosphoglycerate mutase family. BPG-dependent PGAM subfamily. Homodimer.

It catalyses the reaction (2R)-2-phosphoglycerate = (2R)-3-phosphoglycerate. It functions in the pathway carbohydrate degradation; glycolysis; pyruvate from D-glyceraldehyde 3-phosphate: step 3/5. Functionally, catalyzes the interconversion of 2-phosphoglycerate and 3-phosphoglycerate. This Nitratidesulfovibrio vulgaris (strain ATCC 29579 / DSM 644 / CCUG 34227 / NCIMB 8303 / VKM B-1760 / Hildenborough) (Desulfovibrio vulgaris) protein is 2,3-bisphosphoglycerate-dependent phosphoglycerate mutase.